An 88-amino-acid polypeptide reads, in one-letter code: Large ribosomal subunit protein bL27 (88 aa).

The segment at 1–24 is disordered; the sequence is MATKKSGGSSGNGRDSRGRRLGVK.

This sequence belongs to the bacterial ribosomal protein bL27 family.

The protein is Large ribosomal subunit protein bL27 of Ehrlichia canis (strain Jake).